The following is a 521-amino-acid chain: UPF0053 protein BU323 (521 aa).

The next 7 membrane-spanning stretches (helical) occupy residues 13–33, 49–69, 80–100, 125–145, 150–170, 185–205, and 207–227; these read LLTLVILEVVLGIDNLIFVAI, IGLGLALVMRLALLSLISWIV, FFSLSIRDIILLFGGFFLLFK, FWAVVIQIVVLDAVFSLDAII, MVNQLLIMMIAVILATFLMLL, VVVLCLSFLLMIGFSLVTEAL, and FCIPKGYLYAAIGFSILIEIF. 2 CBS domains span residues 311–370 and 374–434; these read MTPR…KIDA and SSKI…DADE.

Belongs to the UPF0053 family.

Its subcellular location is the cell membrane. The polypeptide is UPF0053 protein BU323 (Buchnera aphidicola subsp. Acyrthosiphon pisum (strain APS) (Acyrthosiphon pisum symbiotic bacterium)).